Consider the following 406-residue polypeptide: Kelch domain-containing protein 2 (406 aa).

6 Kelch repeats span residues 31–85 (ERSG…NTEG), 92–136 (SGSC…ERID), 148–207 (LGVW…AWSQ), 221–259 (HACATVGNKGFVFGGRYRDARMNDLHYLNLDTWEWNELI), 271–311 (HSLT…IQFN), and 322–359 (HTACASDEGEVIVFGGCANNLLVHHRAAHSNEVLIFSV).

As to quaternary structure, component of a CRL2(KLHDC2) E3 ubiquitin-protein ligase complex, also named ECS(KLHDC2) complex, composed of CUL2, Elongin BC (ELOB and ELOC), RBX1 and substrate-specific adapter KLHDC2. May form oligomers as a KLHDC2-ELOB-ELOC complex; this interaction is autoinhibitory for the E3 ligase complex as the substrate-binding site of KLHDC2 is blocked in the oligomer. Interacts with CREB3; interaction is direct and specific as it does not interact with CREB1, ATF4, ATF6, JUN, FOS, CEBPA or herpes simplex virus transactivator VP16. Autoubiquitinated by the CRL2(KLHDC2) E3 ligase complex.

The protein localises to the nucleus. Its pathway is protein modification; protein ubiquitination. Substrate-recognition component of a Cul2-RING (CRL2) E3 ubiquitin-protein ligase complex of the DesCEND (destruction via C-end degrons) pathway, which recognizes a C-degron located at the extreme C terminus of target proteins, leading to their ubiquitination and degradation. The C-degron recognized by the DesCEND pathway is usually a motif of less than ten residues and can be present in full-length proteins, truncated proteins or proteolytically cleaved forms. The CRL2(KLHDC2) complex specifically recognizes proteins with a diglycine (Gly-Gly) at the C-terminus, leading to their ubiquitination and degradation. The CRL2(KLHDC2) complex mediates ubiquitination and degradation of truncated SELENOK and SELENOS selenoproteins produced by failed UGA/Sec decoding, which end with a diglycine. The CRL2(KLHDC2) complex also recognizes proteolytically cleaved proteins ending with Gly-Gly, such as the N-terminal fragment of USP1, leading to their degradation. May also act as an indirect repressor of CREB3-mediated transcription by interfering with CREB3-DNA-binding. The sequence is that of Kelch domain-containing protein 2 from Mus musculus (Mouse).